The chain runs to 277 residues: NAD kinase (277 aa).

Aspartate 67 acts as the Proton acceptor in catalysis. Residues 67 to 68 (DG), arginine 72, 137 to 138 (NE), lysine 148, arginine 165, aspartate 167, 178 to 183 (TGYAMS), leucine 202, and glutamine 236 each bind NAD(+).

Belongs to the NAD kinase family. Requires a divalent metal cation as cofactor.

It localises to the cytoplasm. It carries out the reaction NAD(+) + ATP = ADP + NADP(+) + H(+). In terms of biological role, involved in the regulation of the intracellular balance of NAD and NADP, and is a key enzyme in the biosynthesis of NADP. Catalyzes specifically the phosphorylation on 2'-hydroxyl of the adenosine moiety of NAD to yield NADP. The protein is NAD kinase of Pyrococcus abyssi (strain GE5 / Orsay).